Here is a 268-residue protein sequence, read N- to C-terminus: Exopolysaccharide production negative regulator (268 aa).

The N-terminal stretch at 1 to 22 is a signal peptide; that stretch reads MRAGELKSLRVAVLGMSLAVGA.

Its function is as follows. Negatively modulates exopolysaccharide (EPS) biosynthesis. The polypeptide is Exopolysaccharide production negative regulator (exoR) (Rhizobium meliloti (strain 1021) (Ensifer meliloti)).